The sequence spans 70 residues: Non-histone chromosomal protein H6 (70 aa).

A disordered region spans residues 1-70; the sequence is MPKRKSATKG…AAGDGAGNAK (70 aa). Residues 30 to 45 show a composition bias toward basic residues; it reads AKPKKAAAPKKAVKGK. Residues 46–57 show a composition bias toward basic and acidic residues; that stretch reads KAAENGDAKAEA.

This sequence belongs to the HMGN family.

The protein localises to the nucleus. Its subcellular location is the secreted. Functionally, non-histone protein that probably binds to the inner side of nucleosomal DNA, altering the association between the DNA and the nucleosome octamer. In terms of biological role, oncorhyncin III has antibacterial activity against Gram-positive and Gram-negative bacteria at submicromolar concentrations. In Oncorhynchus mykiss (Rainbow trout), this protein is Non-histone chromosomal protein H6.